Here is a 314-residue protein sequence, read N- to C-terminus: Aspartate carbamoyltransferase catalytic subunit (314 aa).

Positions 55 and 56 each coordinate carbamoyl phosphate. An L-aspartate-binding site is contributed by Lys-83. Carbamoyl phosphate contacts are provided by Arg-105, His-139, and Gln-142. L-aspartate is bound by residues Arg-172 and Arg-226. 2 residues coordinate carbamoyl phosphate: Gly-267 and Pro-268.

Belongs to the aspartate/ornithine carbamoyltransferase superfamily. ATCase family. In terms of assembly, heterododecamer (2C3:3R2) of six catalytic PyrB chains organized as two trimers (C3), and six regulatory PyrI chains organized as three dimers (R2).

The enzyme catalyses carbamoyl phosphate + L-aspartate = N-carbamoyl-L-aspartate + phosphate + H(+). Its pathway is pyrimidine metabolism; UMP biosynthesis via de novo pathway; (S)-dihydroorotate from bicarbonate: step 2/3. Functionally, catalyzes the condensation of carbamoyl phosphate and aspartate to form carbamoyl aspartate and inorganic phosphate, the committed step in the de novo pyrimidine nucleotide biosynthesis pathway. The polypeptide is Aspartate carbamoyltransferase catalytic subunit (Rhodococcus opacus (strain B4)).